The sequence spans 652 residues: Spermatogenesis-associated protein 13 (652 aa).

The disordered stretch occupies residues 1-24; it reads MTSASPEDQNAPVGCPKGARRRRP. Phosphoserine is present on Ser78. The tract at residues 81–108 is disordered; that stretch reads IGLDRVGRRRQMRASNVSSDGGTEPSAL. An ABR (APC-binding region) domain region spans residues 98–150; the sequence is SSDGGTEPSALVDDNGSEEDFSYEDLCQASPRYLQPGGEQLAINELISDGNVV. Ser114 carries the phosphoserine modification. One can recognise an SH3 domain in the interval 147 to 206; it reads GNVVCAEALWDHVTMDDQELGFKAGDVIQVLEASNKDWWWGRSEDKEAWFPASFVRLRVN. The interval 209–235 is disordered; that stretch reads ELSENSSSTPSEEQDEEASQSRHRHCE. The DH domain occupies 240-424; the sequence is MRTNVIREIM…KNVACLINER (185 aa). A PH domain is found at 455 to 561; that stretch reads ELIHSGELTK…WLQACADERR (107 aa). The interval 561-652 is C-terminal tail; that stretch reads RRVQEDKEMG…TFNRLTPFRK (92 aa).

Interacts (via ABR and SH3 domain) with APC. The binding of APC enhances its GEF activity by relieving it from an autoinhibitory conformation, in which the ABR and SH3 domains are associated with the C-terminal tail. Interacts (via C-terminal tail) with PPP1R9B (via C-terminus). Interacts with RAC1. In terms of tissue distribution, expressed at high levels in the placenta, spleen and kidney, at moderate levels in lung, small intestine, liver, brain and heart, and at low levels in skeletal muscle. Expression is aberrantly enhanced in most colorectal tumors.

The protein resides in the cytoplasm. It is found in the cell projection. Its subcellular location is the filopodium. The protein localises to the lamellipodium. It localises to the ruffle membrane. The protein resides in the podosome. Both the ABR and the SH3 domains contribute to maintaining the protein in an inhibited conformation by associating with the C-terminal tail. Binding of these domains to the C-terminal tail inhibits the activity of the protein by blocking a region that is required for its GEF activity. In terms of biological role, acts as a guanine nucleotide exchange factor (GEF) for RHOA, RAC1 and CDC42 GTPases. Regulates cell migration and adhesion assembly and disassembly through a RAC1, PI3K, RHOA and AKT1-dependent mechanism. Increases both RAC1 and CDC42 activity, but decreases the amount of active RHOA. Required for MMP9 up-regulation via the JNK signaling pathway in colorectal tumor cells. Involved in tumor angiogenesis and may play a role in intestinal adenoma formation and tumor progression. This Homo sapiens (Human) protein is Spermatogenesis-associated protein 13.